The following is a 254-amino-acid chain: Thiazole synthase (254 aa).

The active-site Schiff-base intermediate with DXP is lysine 95. 1-deoxy-D-xylulose 5-phosphate-binding positions include glycine 156, 182–183, and 204–205; these read AG and NT.

Belongs to the ThiG family. In terms of assembly, homotetramer. Forms heterodimers with either ThiH or ThiS.

It localises to the cytoplasm. It carries out the reaction [ThiS sulfur-carrier protein]-C-terminal-Gly-aminoethanethioate + 2-iminoacetate + 1-deoxy-D-xylulose 5-phosphate = [ThiS sulfur-carrier protein]-C-terminal Gly-Gly + 2-[(2R,5Z)-2-carboxy-4-methylthiazol-5(2H)-ylidene]ethyl phosphate + 2 H2O + H(+). Its pathway is cofactor biosynthesis; thiamine diphosphate biosynthesis. In terms of biological role, catalyzes the rearrangement of 1-deoxy-D-xylulose 5-phosphate (DXP) to produce the thiazole phosphate moiety of thiamine. Sulfur is provided by the thiocarboxylate moiety of the carrier protein ThiS. In vitro, sulfur can be provided by H(2)S. The sequence is that of Thiazole synthase from Shewanella sediminis (strain HAW-EB3).